A 1040-amino-acid chain; its full sequence is Multidrug resistance protein MdtB (1040 aa).

12 helical membrane passes run 25–45 (LLMA…PVAA), 347–367 (LMLA…NIPA), 369–389 (IIPG…MVFL), 396–416 (LTLM…IVVI), 440–460 (IGFT…PLLF), 472–492 (FAVT…TLTP), 537–557 (WLTL…WIVI), 863–883 (LGST…VLGV), 888–908 (FIHP…ALLA), 910–930 (IIAG…LIGI), 968–988 (ILMT…STGV), and 998–1018 (IAMV…TPVI).

It belongs to the resistance-nodulation-cell division (RND) (TC 2.A.6) family. MdtB subfamily. Part of a tripartite efflux system composed of MdtA, MdtB and MdtC. MdtB forms a heteromultimer with MdtC.

It is found in the cell inner membrane. In Salmonella schwarzengrund (strain CVM19633), this protein is Multidrug resistance protein MdtB.